A 927-amino-acid polypeptide reads, in one-letter code: MVTAPLLGWVAVRPIPRLSKLNTCKYVSSSLQSYKRSVGSCLGKQQSRDFSYSATLTDAGINLEKTRNIGIIAHIDAGKTTTTERMLYYSGFTRRIGDVDDGSTVTDFLPAERARGITIQSAAITFHWPPLAADGTSSGPSLEELESQNLPRSRASHTVNLIDTPGHADFTFEVLRSLRILDGAVCILDGVAGVEAQTEKVWHQASVYQIPRVVYVNKLDRDGAAFGRTVREVGSRLQGWPAVCQIPWFEGGNGRFTGIADVISLQGLLWKEGGDGKSVKVFDLAGLENEDKRLAEELKHARVALVELLSEHDEDMVESFFEHEDHLKVPPMTILKSLRKCLLGPEAQKIIPVFAGSSFRNMGVQPLLDAVNNLLPGPSESVDPEISLGNSKGSLGNLLSGELTLQQEPKTANIAKPKQKKKTAVAPTSVDTKHLAANLESCALAFKVVSDAKRGVLVYVRVYSGTLNKGCQLYNTNLHVTERAPRLFKMYANDAVEVDSIPAGHIGVVSGLKYARTGDTLISCTGSKMTPPEPLNTLQLRPIDVPPPVFFASIEPHSLSEEKNMQEALALLLREDPSLHVTVDEDSGQTLLSGMGELHLEIARDRLVNDFKAKATMGRIEIGYRECVLGQSNPVTKIFDREVAGRKGKAGCTAVVEPYDPESGEPSSGGEDIIFAEIVEGNRIIISAPGINISTDKRGKEESSSLPSQFDVNSFRTSLYNGALSALARGPQFAFPMHNTKVTLTCNVVEHLFGSDSSASALSAAARLATQGALRDLATGQNSGTGIMEPVMNVIISIDEASLGAVVHDISSARGGHIISLDEEMPISTSIGGNDSPESEQVVIDVNKIYAPPDPFETPSVAGGLPIQASANQTRTITAKVPLKEMVGYLKHLRSLSAGRGTFVMHVDRFERMSAQRQKAVLAELHR.

Residues 1–57 (MVTAPLLGWVAVRPIPRLSKLNTCKYVSSSLQSYKRSVGSCLGKQQSRDFSYSATLT) constitute a mitochondrion transit peptide. Residues 64–379 (EKTRNIGIIA…AVNNLLPGPS (316 aa)) form the tr-type G domain. GTP contacts are provided by residues 73-80 (AHIDAGKT), 163-167 (DTPGH), and 217-220 (NKLD).

It belongs to the TRAFAC class translation factor GTPase superfamily. Classic translation factor GTPase family. EF-G/EF-2 subfamily.

It localises to the mitochondrion. In terms of biological role, mitochondrial GTPase that mediates the disassembly of ribosomes from messenger RNA at the termination of mitochondrial protein biosynthesis. Not involved in the GTP-dependent ribosomal translocation step during translation elongation. This is Ribosome-releasing factor 2, mitochondrial (mef2) from Talaromyces marneffei (strain ATCC 18224 / CBS 334.59 / QM 7333) (Penicillium marneffei).